The chain runs to 427 residues: UPF0761 membrane protein Plut_1323 (427 aa).

The next 6 membrane-spanning stretches (helical) occupy residues 51-71 (LLSIVPLLAVVLSILNVFAVF), 105-125 (TFTMPIFGALFLFIVALVLIS), 147-167 (FTLYWTVLTLGPVLLATSLAA), 188-208 (LLSLLPSTITVLALLLLYLLV), 221-241 (GALVATLLFEVSKRWFAFYVA), and 251-271 (GALSVIPMLFFWIYLGWVVVL).

Belongs to the UPF0761 family.

It is found in the cell inner membrane. This is UPF0761 membrane protein Plut_1323 from Chlorobium luteolum (strain DSM 273 / BCRC 81028 / 2530) (Pelodictyon luteolum).